The following is a 247-amino-acid chain: Eukaryotic translation initiation factor 6 (247 aa).

Phosphoserine; by CK1 is present on residues serine 174 and serine 175.

Belongs to the eIF-6 family. Monomer. Associates with the 60S ribosomal subunit. In terms of processing, phosphorylation at Ser-174 and Ser-175 promotes nuclear export.

It is found in the cytoplasm. Its subcellular location is the nucleus. It localises to the nucleolus. Binds to the 60S ribosomal subunit and prevents its association with the 40S ribosomal subunit to form the 80S initiation complex in the cytoplasm. Is also involved in ribosome biogenesis. Associates with pre-60S subunits in the nucleus and is involved in its nuclear export. In Talaromyces stipitatus (strain ATCC 10500 / CBS 375.48 / QM 6759 / NRRL 1006) (Penicillium stipitatum), this protein is Eukaryotic translation initiation factor 6 (tif6).